A 703-amino-acid polypeptide reads, in one-letter code: Polyribonucleotide nucleotidyltransferase (703 aa).

D485 and D491 together coordinate Mg(2+). One can recognise a KH domain in the interval 552-611; sequence PRIYTLKIDQDKIRDVIGKGGAMIRSITEASDTNIEIEDDGTIKIFATERAKADIAISKI. Residues 621 to 689 form the S1 motif domain; sequence GKTYEGKVTR…RQNRVRLSIK (69 aa).

Belongs to the polyribonucleotide nucleotidyltransferase family. In terms of assembly, component of the RNA degradosome, which is a multiprotein complex involved in RNA processing and mRNA degradation. The cofactor is Mg(2+).

It is found in the cytoplasm. The enzyme catalyses RNA(n+1) + phosphate = RNA(n) + a ribonucleoside 5'-diphosphate. Its function is as follows. Involved in mRNA degradation. Catalyzes the phosphorolysis of single-stranded polyribonucleotides processively in the 3'- to 5'-direction. This Pseudoalteromonas atlantica (strain T6c / ATCC BAA-1087) protein is Polyribonucleotide nucleotidyltransferase.